Consider the following 1196-residue polypeptide: DNA-directed RNA polymerase subunit beta (1196 aa).

It belongs to the RNA polymerase beta chain family. The RNAP catalytic core consists of 2 alpha, 1 beta, 1 beta' and 1 omega subunit. When a sigma factor is associated with the core the holoenzyme is formed, which can initiate transcription.

The enzyme catalyses RNA(n) + a ribonucleoside 5'-triphosphate = RNA(n+1) + diphosphate. Functionally, DNA-dependent RNA polymerase catalyzes the transcription of DNA into RNA using the four ribonucleoside triphosphates as substrates. The chain is DNA-directed RNA polymerase subunit beta from Lactococcus lactis subsp. cremoris (strain MG1363).